Here is a 419-residue protein sequence, read N- to C-terminus: Indole prenyltransferase tdiB (419 aa).

58–59 (PS) is an L-tryptophan binding site. R81, K165, Y167, R236, K238, Y240, Y330, and Y394 together coordinate substrate.

Belongs to the tryptophan dimethylallyltransferase family.

It catalyses the reaction didemethylasterriquinone D + dimethylallyl diphosphate = asterriquinone C1 + diphosphate. Its pathway is secondary metabolite biosynthesis. In terms of biological role, indole prenyltransferase; part of the gene cluster that mediates the biosynthesis of terrequinone A, an antitumor agent. The first step in the biosynthetic pathway for terrequinone A is formation of indole pyruvic acid (IPA) from L-tryptophan by the aminotransferase tdiD. The nonribosomal peptide synthase tdiA then immediately converts unstable IPA to didemethylasterriquinone D (DDAQ D), via condensation of 2 IPA molecules. The symmetric connectivity of the 2 IPA molecules is thought to arise by head-to-tail dual Claisen condensations facilitated by the TE domain. TdiB then catalyzes reverse prenylation by transferring dimethylallyl diphosphate to carbon atom 2' of DDAQ D, to yield asterriquinone C-1. Finally, tdiC and tdiE enzymes robustly convert asterriquinone C-1 to terrequinone A via a transformation involving regular prenylation at carbon atom 5, which requires elimination of the hydroxy group on C-5. The polypeptide is Indole prenyltransferase tdiB (Emericella nidulans (strain FGSC A4 / ATCC 38163 / CBS 112.46 / NRRL 194 / M139) (Aspergillus nidulans)).